Here is a 129-residue protein sequence, read N- to C-terminus: Small ribosomal subunit protein uS11 (129 aa).

This sequence belongs to the universal ribosomal protein uS11 family. In terms of assembly, part of the 30S ribosomal subunit. Interacts with proteins S7 and S18. Binds to IF-3.

In terms of biological role, located on the platform of the 30S subunit, it bridges several disparate RNA helices of the 16S rRNA. Forms part of the Shine-Dalgarno cleft in the 70S ribosome. The sequence is that of Small ribosomal subunit protein uS11 from Enterobacter sp. (strain 638).